The chain runs to 61 residues: Large ribosomal subunit protein uL30 (61 aa).

It belongs to the universal ribosomal protein uL30 family. In terms of assembly, part of the 50S ribosomal subunit.

The sequence is that of Large ribosomal subunit protein uL30 from Bifidobacterium longum (strain DJO10A).